Consider the following 328-residue polypeptide: Delta-aminolevulinic acid dehydratase (328 aa).

Residue K200 is the Schiff-base intermediate with substrate of the active site. R210 and K222 together coordinate 5-aminolevulinate. E238 lines the Mg(2+) pocket. K253 serves as the catalytic Schiff-base intermediate with substrate. 5-aminolevulinate contacts are provided by S279 and Y318.

The protein belongs to the ALAD family. As to quaternary structure, homooctamer.

It carries out the reaction 2 5-aminolevulinate = porphobilinogen + 2 H2O + H(+). Its pathway is porphyrin-containing compound metabolism; protoporphyrin-IX biosynthesis; coproporphyrinogen-III from 5-aminolevulinate: step 1/4. Stimulated by magnesium, inhibited by zinc. Catalyzes an early step in the biosynthesis of tetrapyrroles. Binds two molecules of 5-aminolevulinate per subunit, each at a distinct site, and catalyzes their condensation to form porphobilinogen. This is Delta-aminolevulinic acid dehydratase (hemB) from Chlorobaculum parvum (strain DSM 263 / NCIMB 8327) (Chlorobium vibrioforme subsp. thiosulfatophilum).